Here is a 354-residue protein sequence, read N- to C-terminus: Ornithine transcarbamylase, mitochondrial (354 aa).

The N-terminal 32 residues, 1-32, are a transit peptide targeting the mitochondrion; sequence MLFNLKNLYRITKLTQNSKHLPRHFCRGPPNQ. Residues 90-94, Arg141, and His168 each bind carbamoyl phosphate; that span reads STRTR. Residue Arg141 coordinates L-ornithine. Residues Asn199, 263–267, 302–305, and Arg330 each bind L-ornithine; these read DTWIS and HCLP. Cys303 is a catalytic residue. Residue Arg330 participates in carbamoyl phosphate binding.

The protein belongs to the aspartate/ornithine carbamoyltransferase superfamily. OTCase family. As to quaternary structure, homotrimer. Post-translationally, cleavage of the precursor form to the active form occurs only in the kidney. In terms of tissue distribution, expressed in kidney, brain, heart, liver, pancreas, gizzard, small intestine and breast muscle. More abundant in mitochondrion-rich organs (heart, liver and brain) than in other organs. Activity is only detected in the kidney.

It is found in the mitochondrion matrix. The enzyme catalyses carbamoyl phosphate + L-ornithine = L-citrulline + phosphate + H(+). It participates in nitrogen metabolism; urea cycle; L-citrulline from L-ornithine and carbamoyl phosphate: step 1/1. Inhibition by ornithine increases at higher pH. Catalyzes the second step of the urea cycle, the condensation of carbamoyl phosphate with L-ornithine to form L-citrulline. The urea cycle ensures the detoxification of ammonia by converting it to urea for excretion. The chain is Ornithine transcarbamylase, mitochondrial from Gallus gallus (Chicken).